A 367-amino-acid polypeptide reads, in one-letter code: Glutamate 5-kinase (367 aa).

Lys-10 lines the ATP pocket. Substrate contacts are provided by Ser-50, Asp-137, and Asn-149. Residues 169–170 (TD) and 211–217 (TGGMETK) contribute to the ATP site. The region spanning 275–353 (AGDITVDDGA…QDISDILGYE (79 aa)) is the PUA domain.

The protein belongs to the glutamate 5-kinase family.

The protein resides in the cytoplasm. It catalyses the reaction L-glutamate + ATP = L-glutamyl 5-phosphate + ADP. It participates in amino-acid biosynthesis; L-proline biosynthesis; L-glutamate 5-semialdehyde from L-glutamate: step 1/2. Its function is as follows. Catalyzes the transfer of a phosphate group to glutamate to form L-glutamate 5-phosphate. The protein is Glutamate 5-kinase of Sodalis glossinidius (strain morsitans).